The primary structure comprises 278 residues: 3-methyl-2-oxobutanoate hydroxymethyltransferase (278 aa).

Mg(2+) contacts are provided by aspartate 52 and aspartate 91. 3-methyl-2-oxobutanoate contacts are provided by residues 52-53 (DS), aspartate 91, and lysine 121. Glutamate 123 serves as a coordination point for Mg(2+). Residue glutamate 190 is the Proton acceptor of the active site.

This sequence belongs to the PanB family. Homodecamer; pentamer of dimers. Mg(2+) is required as a cofactor.

Its subcellular location is the cytoplasm. It carries out the reaction 3-methyl-2-oxobutanoate + (6R)-5,10-methylene-5,6,7,8-tetrahydrofolate + H2O = 2-dehydropantoate + (6S)-5,6,7,8-tetrahydrofolate. It participates in cofactor biosynthesis; (R)-pantothenate biosynthesis; (R)-pantoate from 3-methyl-2-oxobutanoate: step 1/2. Functionally, catalyzes the reversible reaction in which hydroxymethyl group from 5,10-methylenetetrahydrofolate is transferred onto alpha-ketoisovalerate to form ketopantoate. The polypeptide is 3-methyl-2-oxobutanoate hydroxymethyltransferase (Rhodospirillum rubrum (strain ATCC 11170 / ATH 1.1.1 / DSM 467 / LMG 4362 / NCIMB 8255 / S1)).